The following is a 470-amino-acid chain: Meiosis-specific with OB domain-containing protein (470 aa).

Residues 167–272 (IINVLAAVRS…EANILLNFIR (106 aa)) constitute a DNA-binding region (OB).

Belongs to the MEIOB family. As to quaternary structure, component of a multiprotein complex with RPA2 and SPATA22. Interacts with SPATA22. Interacts with the complex BRME1:HSF2BP:BRCA2.

It is found in the cytoplasm. It localises to the nucleus. The protein localises to the chromosome. Single-stranded DNA-binding protein required for homologous recombination in meiosis I. Required for double strand breaks (DSBs) repair and crossover formation and promotion of faithful and complete synapsis. Not required for the initial loading of recombinases but required to maintain a proper number of RAD51 and DMC1 foci after the zygotene stage. May act by ensuring the stabilization of recombinases, which is required for successful homology search and meiotic recombination. Displays Single-stranded DNA 3'-5' exonuclease activity in vitro. The protein is Meiosis-specific with OB domain-containing protein of Rattus norvegicus (Rat).